Here is a 116-residue protein sequence, read N- to C-terminus: Large ribosomal subunit protein bL17 (116 aa).

Belongs to the bacterial ribosomal protein bL17 family. In terms of assembly, part of the 50S ribosomal subunit. Contacts protein L32.

The chain is Large ribosomal subunit protein bL17 from Cyanothece sp. (strain PCC 7425 / ATCC 29141).